The primary structure comprises 297 residues: 32 kDa beta-galactoside-binding lectin lec-3 (297 aa).

Galectin domains lie at 11–142 (YRSK…VQWG) and 151–290 (ESGI…IQVV). 224–230 (WGNEERE) contacts a beta-D-galactoside.

In terms of biological role, binds galactose. The chain is 32 kDa beta-galactoside-binding lectin lec-3 (lec-3) from Caenorhabditis elegans.